The following is a 162-amino-acid chain: NADH-quinone oxidoreductase subunit I (162 aa).

4Fe-4S ferredoxin-type domains lie at 54–83 and 93–122; these read RRYE…IESE and TRYD…ETQI. Residues Cys-63, Cys-66, Cys-69, Cys-73, Cys-102, Cys-105, Cys-108, and Cys-112 each contribute to the [4Fe-4S] cluster site.

Belongs to the complex I 23 kDa subunit family. NDH-1 is composed of 14 different subunits. Subunits NuoA, H, J, K, L, M, N constitute the membrane sector of the complex. [4Fe-4S] cluster is required as a cofactor.

The protein localises to the cell inner membrane. The catalysed reaction is a quinone + NADH + 5 H(+)(in) = a quinol + NAD(+) + 4 H(+)(out). In terms of biological role, NDH-1 shuttles electrons from NADH, via FMN and iron-sulfur (Fe-S) centers, to quinones in the respiratory chain. The immediate electron acceptor for the enzyme in this species is believed to be ubiquinone. Couples the redox reaction to proton translocation (for every two electrons transferred, four hydrogen ions are translocated across the cytoplasmic membrane), and thus conserves the redox energy in a proton gradient. This chain is NADH-quinone oxidoreductase subunit I, found in Burkholderia ambifaria (strain MC40-6).